The following is a 187-amino-acid chain: Large ribosomal subunit protein uL6c (187 aa).

It belongs to the universal ribosomal protein uL6 family. Part of the 50S ribosomal subunit.

The protein localises to the plastid. It is found in the chloroplast. Functionally, binds 23S rRNA. This chain is Large ribosomal subunit protein uL6c (rpl6), found in Thalassiosira pseudonana (Marine diatom).